Consider the following 250-residue polypeptide: Geranylgeranylglyceryl phosphate synthase (250 aa).

Positions 23 and 52 each coordinate Mg(2+). Sn-glycerol 1-phosphate contacts are provided by residues 170-176 (YIEAGSG), 202-203 (GG), and 224-225 (GT).

It belongs to the GGGP/HepGP synthase family. Group II subfamily. It depends on Mg(2+) as a cofactor.

Its subcellular location is the cytoplasm. It catalyses the reaction sn-glycerol 1-phosphate + (2E,6E,10E)-geranylgeranyl diphosphate = sn-3-O-(geranylgeranyl)glycerol 1-phosphate + diphosphate. Its pathway is membrane lipid metabolism; glycerophospholipid metabolism. Functionally, prenyltransferase that catalyzes the transfer of the geranylgeranyl moiety of geranylgeranyl diphosphate (GGPP) to the C3 hydroxyl of sn-glycerol-1-phosphate (G1P). This reaction is the first ether-bond-formation step in the biosynthesis of archaeal membrane lipids. This Methanobrevibacter smithii (strain ATCC 35061 / DSM 861 / OCM 144 / PS) protein is Geranylgeranylglyceryl phosphate synthase.